A 342-amino-acid polypeptide reads, in one-letter code: Protein RecA 1 (342 aa).

Position 68–75 (68–75) interacts with ATP; it reads GNESSGKT.

This sequence belongs to the RecA family.

The protein resides in the cytoplasm. In terms of biological role, can catalyze the hydrolysis of ATP in the presence of single-stranded DNA, the ATP-dependent uptake of single-stranded DNA by duplex DNA, and the ATP-dependent hybridization of homologous single-stranded DNAs. It interacts with LexA causing its activation and leading to its autocatalytic cleavage. The polypeptide is Protein RecA 1 (Myxococcus xanthus).